The following is a 369-amino-acid chain: Glutamate 5-kinase (369 aa).

ATP is bound at residue K9. Substrate contacts are provided by S49, D136, and N148. ATP-binding positions include 168–169 (TD) and 210–216 (TGGMLTK). The PUA domain maps to 275 to 355 (RGSVYVDEGA…KGVFIHRDDW (81 aa)).

It belongs to the glutamate 5-kinase family.

It is found in the cytoplasm. It catalyses the reaction L-glutamate + ATP = L-glutamyl 5-phosphate + ADP. Its pathway is amino-acid biosynthesis; L-proline biosynthesis; L-glutamate 5-semialdehyde from L-glutamate: step 1/2. In terms of biological role, catalyzes the transfer of a phosphate group to glutamate to form L-glutamate 5-phosphate. The protein is Glutamate 5-kinase of Neisseria meningitidis serogroup C / serotype 2a (strain ATCC 700532 / DSM 15464 / FAM18).